The chain runs to 238 residues: NEDD4-binding protein 2-like 1 (238 aa).

Disordered stretches follow at residues 1–36 (MEDS…PRRH) and 183–212 (VLHA…WNTY). Residues 20 to 31 (QPPPRPPPARGP) are compositionally biased toward pro residues. Over residues 192–212 (ANRNQGRNSEPSSGSGYWNTY) the composition is skewed to polar residues.

Interacts with dynactin subunit proteins, including DCTN4, DCTN5 and DCTN5.

In terms of biological role, might play a role in adipocyte differentiation and triglyceride accumulation. The chain is NEDD4-binding protein 2-like 1 (N4bp2l1) from Mus musculus (Mouse).